The chain runs to 102 residues: Small ribosomal subunit protein uS10 (102 aa).

This sequence belongs to the universal ribosomal protein uS10 family. In terms of assembly, part of the 30S ribosomal subunit.

Functionally, involved in the binding of tRNA to the ribosomes. The polypeptide is Small ribosomal subunit protein uS10 (Gluconobacter oxydans (strain 621H) (Gluconobacter suboxydans)).